The chain runs to 90 residues: Small ribosomal subunit protein uS15c (90 aa).

Belongs to the universal ribosomal protein uS15 family. As to quaternary structure, part of the 30S ribosomal subunit.

It localises to the plastid. The protein localises to the chloroplast. The polypeptide is Small ribosomal subunit protein uS15c (rps15) (Buxus microphylla (Littleleaf boxwood)).